The primary structure comprises 417 residues: Phosphoglycerate kinase, cytosolic (417 aa).

Positions 23, 24, 25, 26, 39, 61, 62, 64, 65, 132, 168, and 169 each coordinate (2R)-3-phosphoglycerate. 2 residues coordinate ADP: glycine 214 and alanine 215. Glycine 214 is a binding site for CDP. The AMP site is built by alanine 215 and lysine 216. Alanine 215 is an ATP binding site. Alanine 215 contacts Mg(2+). Residue lysine 216 participates in (2R)-3-phosphoglycerate binding. Aspartate 219 contacts CDP. Aspartate 219 contributes to the Mg(2+) binding site. ADP-binding residues include lysine 220 and glycine 238. Lysine 220 contacts AMP. Lysine 220 serves as a coordination point for ATP. Glycine 238 serves as a coordination point for CDP. Residues alanine 239 and alanine 311 each coordinate AMP. Residues alanine 239 and alanine 311 each contribute to the ATP site. The ADP site is built by alanine 311 and asparagine 335. CDP-binding residues include glycine 336 and phenylalanine 341. The ADP site is built by phenylalanine 341, glutamate 342, aspartate 374, and serine 375. An AMP-binding site is contributed by glutamate 342. Glutamate 342, aspartate 374, and serine 375 together coordinate ATP. Aspartate 374 lines the Mg(2+) pocket.

Belongs to the phosphoglycerate kinase family. In terms of assembly, monomer. The cofactor is Mg(2+).

It localises to the cytoplasm. The enzyme catalyses (2R)-3-phosphoglycerate + ATP = (2R)-3-phospho-glyceroyl phosphate + ADP. The protein operates within carbohydrate degradation; glycolysis; pyruvate from D-glyceraldehyde 3-phosphate: step 2/5. The sequence is that of Phosphoglycerate kinase, cytosolic (PGKB) from Leishmania major.